Here is a 530-residue protein sequence, read N- to C-terminus: PTS system maltose-specific EIICB component (530 aa).

In terms of domain architecture, PTS EIIC type-1 spans 1–431 (MTAKTAPKVT…FNLKTPGRDS (431 aa)). 10 helical membrane-spanning segments follow: residues 22–42 (FMLP…GSSL), 69–89 (IGSF…PLGL), 96–116 (VAAF…NFWL), 138–158 (ILGI…GIIV), 189–209 (LVMG…AMGI), 289–309 (FLSQ…ALAM), 321–341 (IKGL…TEPL), 343–363 (FLFL…TGLG), 369–389 (VLGV…VFGI), and 399–419 (MVPV…RFAI). The 82-residue stretch at 449–530 (GYNVPAILEA…MAGLMHTVQA (82 aa)) folds into the PTS EIIB type-1 domain. C471 serves as the catalytic Phosphocysteine intermediate; for EIIB activity.

It localises to the cell inner membrane. The catalysed reaction is D-maltose(out) + N(pros)-phospho-L-histidyl-[protein] = alpha-maltose 6'-phosphate(in) + L-histidyl-[protein]. The phosphoenolpyruvate-dependent sugar phosphotransferase system (sugar PTS), a major carbohydrate active transport system, catalyzes the phosphorylation of incoming sugar substrates concomitantly with their translocation across the cell membrane. This system is involved in maltose transport. MalX can also recognize and transport glucose even though this sugar may not represent the natural substrate of the system. This Escherichia coli (strain K12) protein is PTS system maltose-specific EIICB component.